Reading from the N-terminus, the 201-residue chain is 3-isopropylmalate dehydratase small subunit (201 aa).

It belongs to the LeuD family. LeuD type 1 subfamily. In terms of assembly, heterodimer of LeuC and LeuD.

The catalysed reaction is (2R,3S)-3-isopropylmalate = (2S)-2-isopropylmalate. The protein operates within amino-acid biosynthesis; L-leucine biosynthesis; L-leucine from 3-methyl-2-oxobutanoate: step 2/4. Catalyzes the isomerization between 2-isopropylmalate and 3-isopropylmalate, via the formation of 2-isopropylmaleate. This is 3-isopropylmalate dehydratase small subunit from Shewanella amazonensis (strain ATCC BAA-1098 / SB2B).